Here is a 349-residue protein sequence, read N- to C-terminus: Hepatic sodium/bile acid cotransporter (349 aa).

Residues 1-22 are Extracellular-facing; the sequence is MEAHNASAPFNFTLPPNFGKRP. 2 N-linked (GlcNAc...) asparagine glycosylation sites follow: Asn-5 and Asn-11. The chain crosses the membrane as a helical span at residues 23–44; the sequence is TDLALSVILVFMLFFIMLSLGC. Residues 45–47 lie on the Cytoplasmic side of the membrane; the sequence is TME. The chain crosses the membrane as a helical span at residues 48-83; that stretch reads FSKIKAHLWKPKGLAIALVAQYGIMPLTAFVLGKVF. The Extracellular portion of the chain corresponds to 84-86; the sequence is RLK. A discontinuously helical membrane pass occupies residues 87–112; it reads NIEALAILVCGCSPGGNLSNVFSLAM. At 113 to 115 the chain is on the cytoplasmic side; sequence KGD. A helical membrane pass occupies residues 116 to 142; the sequence is MNLSIVMTTCSTFCALGMMPLLLYIYS. At 143–156 the chain is on the extracellular side; sequence RGIYDGDLKDKVPY. The helical transmembrane segment at 157-179 threads the bilayer; the sequence is KGIVISLVLVLIPCTIGIVLKSK. Over 180–183 the chain is Cytoplasmic; it reads RPQY. The helical transmembrane segment at 184–217 threads the bilayer; that stretch reads MRYVIKGGMIIILLCSVAVTVLSAINVGKSIMFA. The Extracellular segment spans residues 218 to 219; sequence MT. Residues 220–243 traverse the membrane as a helical segment; that stretch reads PLLIATSSLMPFIGFLLGYVLSAL. Topologically, residues 244-247 are cytoplasmic; it reads FCLN. A discontinuously helical membrane pass occupies residues 248 to 273; that stretch reads GRCRRTVSMETGCQNVQLCSTILNVA. Residues 274–280 lie on the Extracellular side of the membrane; that stretch reads FPPEVIG. The chain crosses the membrane as a helical span at residues 281–311; the sequence is PLFFFPLLYMIFQLGEGLLLIAIFWCYEKFK. At 312–349 the chain is on the cytoplasmic side; the sequence is TPKDKTKMIYTAATTEETIPGALGNGTYKGEDCSPCTA.

Belongs to the bile acid:sodium symporter (BASS) (TC 2.A.28) family. As to quaternary structure, (Microbial infection) Interacts with the myristoylated pre-S1 domain of hepatitis B virus large envelope protein; myristoylation is essential for this interaction. Expressed in liver. Expressed in placental trophoblasts.

It is found in the cell membrane. It carries out the reaction taurocholate(out) + 2 Na(+)(out) = taurocholate(in) + 2 Na(+)(in). The enzyme catalyses cholate(out) + 2 Na(+)(out) = cholate(in) + 2 Na(+)(in). The catalysed reaction is estrone 3-sulfate(out) + 2 Na(+)(out) = estrone 3-sulfate(in) + 2 Na(+)(in). It catalyses the reaction taurochenodeoxycholate(out) + 2 Na(+)(out) = taurochenodeoxycholate(in) + 2 Na(+)(in). It carries out the reaction tauroursodeoxycholate(out) + 2 Na(+)(out) = tauroursodeoxycholate(in) + 2 Na(+)(in). The enzyme catalyses glycocholate(out) + 2 Na(+)(out) = glycocholate(in) + 2 Na(+)(in). The catalysed reaction is tauronorcholate(out) + 2 Na(+)(out) = tauronorcholate(in) + 2 Na(+)(in). It catalyses the reaction taurodeoxycholate(out) + 2 Na(+)(out) = taurodeoxycholate(in) + 2 Na(+)(in). It carries out the reaction tauroallocholate(out) + 2 Na(+)(out) = tauroallocholate(in) + 2 Na(+)(in). The enzyme catalyses taurohyodeoxycholate(out) + 2 Na(+)(out) = taurohyodeoxycholate(in) + 2 Na(+)(in). The catalysed reaction is taurohyocholate(out) + 2 Na(+)(out) = taurohyocholate(in) + 2 Na(+)(in). It catalyses the reaction tauro-beta-muricholate(out) + 2 Na(+)(out) = tauro-beta-muricholate(in) + 2 Na(+)(in). Its activity is regulated as follows. The transport of bile acids is sodium-dependent. In terms of biological role, as a major transporter of conjugated bile salts from plasma into the hepatocyte, it plays a key role in the enterohepatic circulation of bile salts necessary for the solubilization and absorption of dietary fat and fat-soluble vitamins. It is strictly dependent on the extracellular presence of sodium. It exhibits broad substrate specificity and transports various bile acids, such as taurocholate, cholate, as well as non-bile acid organic compounds, such as estrone sulfate. Works collaboratively with the ileal transporter (NTCP2), the organic solute transporter (OST), and the bile salt export pump (BSEP), to ensure efficacious biological recycling of bile acids during enterohepatic circulation. Functionally, (Microbial infection) Acts as an entry receptor for hepatitis B virus (HBV). The recognition for human SLC10A1/NTCP is highly specific. In Homo sapiens (Human), this protein is Hepatic sodium/bile acid cotransporter (SLC10A1).